Here is a 515-residue protein sequence, read N- to C-terminus: Protein nucleotidyltransferase YdiU (515 aa).

ATP contacts are provided by glycine 101, glycine 103, arginine 104, lysine 124, aspartate 136, glycine 137, arginine 194, and arginine 201. Aspartate 269 serves as the catalytic Proton acceptor. Asparagine 270 and aspartate 279 together coordinate Mg(2+). Aspartate 279 provides a ligand contact to ATP.

The protein belongs to the SELO family. The cofactor is Mg(2+). It depends on Mn(2+) as a cofactor.

It catalyses the reaction L-seryl-[protein] + ATP = 3-O-(5'-adenylyl)-L-seryl-[protein] + diphosphate. It carries out the reaction L-threonyl-[protein] + ATP = 3-O-(5'-adenylyl)-L-threonyl-[protein] + diphosphate. The enzyme catalyses L-tyrosyl-[protein] + ATP = O-(5'-adenylyl)-L-tyrosyl-[protein] + diphosphate. The catalysed reaction is L-histidyl-[protein] + UTP = N(tele)-(5'-uridylyl)-L-histidyl-[protein] + diphosphate. It catalyses the reaction L-seryl-[protein] + UTP = O-(5'-uridylyl)-L-seryl-[protein] + diphosphate. It carries out the reaction L-tyrosyl-[protein] + UTP = O-(5'-uridylyl)-L-tyrosyl-[protein] + diphosphate. Nucleotidyltransferase involved in the post-translational modification of proteins. It can catalyze the addition of adenosine monophosphate (AMP) or uridine monophosphate (UMP) to a protein, resulting in modifications known as AMPylation and UMPylation. The chain is Protein nucleotidyltransferase YdiU from Cytophaga hutchinsonii (strain ATCC 33406 / DSM 1761 / CIP 103989 / NBRC 15051 / NCIMB 9469 / D465).